The chain runs to 67 residues: Large ribosomal subunit protein bL35 (67 aa).

The protein belongs to the bacterial ribosomal protein bL35 family.

The sequence is that of Large ribosomal subunit protein bL35 from Sinorhizobium fredii (strain NBRC 101917 / NGR234).